The following is a 131-amino-acid chain: ATP synthase epsilon chain (131 aa).

This sequence belongs to the ATPase epsilon chain family. As to quaternary structure, F-type ATPases have 2 components, CF(1) - the catalytic core - and CF(0) - the membrane proton channel. CF(1) has five subunits: alpha(3), beta(3), gamma(1), delta(1), epsilon(1). CF(0) has three main subunits: a, b and c.

Its subcellular location is the cell inner membrane. Functionally, produces ATP from ADP in the presence of a proton gradient across the membrane. This is ATP synthase epsilon chain from Wolinella succinogenes (strain ATCC 29543 / DSM 1740 / CCUG 13145 / JCM 31913 / LMG 7466 / NCTC 11488 / FDC 602W) (Vibrio succinogenes).